The following is a 527-amino-acid chain: Estrogen receptor beta (527 aa).

The segment at 1 to 145 is modulating; the sequence is MDVKNSPSSL…SPSSKRDAHF (145 aa). A phosphoserine; by MAPK mark is found at Ser-84 and Ser-102. NR C4-type zinc fingers lie at residues 146–166 and 182–206; these read CAVC…CEGC and CPAT…LRKC. The segment at residues 146 to 211 is a DNA-binding region (nuclear receptor); the sequence is CAVCSDYASG…RLRKCYEVGM (66 aa). Residues 261 to 495 form the NR LBD domain; that stretch reads SPEQLVLTLL…DLLLEMLNAH (235 aa).

This sequence belongs to the nuclear hormone receptor family. NR3 subfamily. Binds DNA as a homodimer. Can form a heterodimer with ESR1. Interacts with NCOA1, NCOA3, NCOA5 and NCOA6 coactivators, leading to a strong increase of transcription of target genes. Interacts with UBE1C and AKAP13. Interacts with DNTTIP2. Interacts with CCDC62 in the presence of estradiol/E2; this interaction seems to enhance the transcription of target genes. Interacts with DNAAF4. Interacts with PRMT2. Interacts with CCAR2 (via N-terminus) in a ligand-independent manner. Interacts with RBM39, in the presence of estradiol (E2). Interacts with STUB1/CHIP. In terms of processing, phosphorylation at Ser-84 and Ser-102 recruits NCOA1. In terms of tissue distribution, present in granulosa cells of antral follicles in various stages of follicular growth.

The protein resides in the nucleus. In terms of biological role, nuclear hormone receptor. Binds estrogens with an affinity similar to that of ESR1ESR1/ER-alpha, and activates expression of reporter genes containing estrogen response elements (ERE) in an estrogen-dependent manner. In Bos taurus (Bovine), this protein is Estrogen receptor beta (ESR2).